The following is a 388-amino-acid chain: Lipid-A-disaccharide synthase (388 aa).

The protein belongs to the LpxB family.

The enzyme catalyses a lipid X + a UDP-2-N,3-O-bis[(3R)-3-hydroxyacyl]-alpha-D-glucosamine = a lipid A disaccharide + UDP + H(+). It participates in bacterial outer membrane biogenesis; LPS lipid A biosynthesis. Functionally, condensation of UDP-2,3-diacylglucosamine and 2,3-diacylglucosamine-1-phosphate to form lipid A disaccharide, a precursor of lipid A, a phosphorylated glycolipid that anchors the lipopolysaccharide to the outer membrane of the cell. This is Lipid-A-disaccharide synthase from Burkholderia mallei (strain NCTC 10247).